We begin with the raw amino-acid sequence, 158 residues long: Small ribosomal subunit protein uS9 (158 aa).

This sequence belongs to the universal ribosomal protein uS9 family.

The protein is Small ribosomal subunit protein uS9 of Rhodopseudomonas palustris (strain HaA2).